The sequence spans 1149 residues: Protogenin A (1149 aa).

Residues 1–23 (MASFKRDLYLFLAVFLSISGVWS) form the signal peptide. Residues 24 to 932 (FSELFFIKEP…GFYHLDQRSM (909 aa)) lie on the Extracellular side of the membrane. 4 Ig-like domains span residues 27-117 (LFFI…ARLT), 122-209 (STFT…ATLT), 222-309 (PRII…ANIT), and 314-399 (PSLV…RLIV). Intrachain disulfides connect cysteine 48-cysteine 100 and cysteine 143-cysteine 192. An N-linked (GlcNAc...) asparagine glycan is attached at asparagine 78. A glycan (N-linked (GlcNAc...) asparagine) is linked at asparagine 230. Cysteine 243 and cysteine 291 are oxidised to a cystine. Asparagine 300 and asparagine 307 each carry an N-linked (GlcNAc...) asparagine glycan. Cysteine 335 and cysteine 382 are oxidised to a cystine. Fibronectin type-III domains follow at residues 408-502 (APRN…TLED), 504-600 (PLRA…TPKA), 605-704 (VPLA…VRDR), 711-804 (PPHH…TLPE), and 809-905 (APVG…IHTD). 2 N-linked (GlcNAc...) asparagine glycosylation sites follow: asparagine 460 and asparagine 475. A glycan (N-linked (GlcNAc...) asparagine) is linked at asparagine 617. The tract at residues 646-666 (GQSEAAQAQIPPHHRQHTIGG) is disordered. 3 N-linked (GlcNAc...) asparagine glycosylation sites follow: asparagine 720, asparagine 741, and asparagine 753. A helical membrane pass occupies residues 933–953 (AGIAVGVCIALTCIIICILIL). Residues 954-1149 (ACRSKTRKSC…EQEMTDLHPV (196 aa)) lie on the Cytoplasmic side of the membrane. A disordered region spans residues 1060–1149 (YTETSPENPP…EQEMTDLHPV (90 aa)). The segment covering 1061–1073 (TETSPENPPTTLQ) has biased composition (polar residues). Residues 1084 to 1106 (EGSHSSEGSHETSDSGRYSHDDT) show a composition bias toward basic and acidic residues.

The protein belongs to the immunoglobulin superfamily. DCC family. As to expression, expression begins in the posterior region of the embryo and this posterior restriction persists at the 4 s stage. At early somite stages, expressed along the neural tube with lower levels in the lateral and paraxial mesoderm. Expression decreases caudally and rostrally becomes restricted to the ventral part of the brain. Widespread in the spinal cord at 30 hours post-fertilization (hpf) and is also expressed in the lens from this time. At 40 hpf, expression is restricted to the lens.

The protein localises to the membrane. Its function is as follows. May play a role in anteroposterior axis elongation. This chain is Protogenin A, found in Danio rerio (Zebrafish).